Consider the following 521-residue polypeptide: MTNIHTDKILILDFGAQYTQLIARRIREIGVYCEIWAWDHDPSEIAGFGAKGIILSGGPESTTLPGAPVAPQEVFDSGLPVFGICYGMQTLAAQLGGATEAADQREFGHAEVDVIAADALFAGLTDHAGAPRLNVWMSHGDHVSQVPPGFTITATTDRIPVAAMSNEDKRWYGVQFHPEVTHTLQGQTLLRRFVVDICGCQTLWTAANIIDDQIARVREQVGDDDVILGLSGGVDSSVVAALLHKAIGDKLTCVFVDTGLLRWQEGDQVMAMFAEHMGVKVIRVNAADRYFAKLEGVSDPEAKRKIIGNLFVEIFDEESNTLANAKWLAQGTIYPDVIESAGSKTGNAHVIKSHHNVGGLPQHMKLGLVEPLRELFKDEVRRLGVELGLPRTMVYRHPFPGPGLGVRILGEVKREYAELLAKADAIFIDELRKADLYDKISQAFAVFLPVKSVGVVGDARAYEWVIALRAVETIDFMTAHWAHLPYDFLGTVSNRIINELRGVSRVVYDISGKPPATIEWE.

The Glutamine amidotransferase type-1 domain occupies 8–203; sequence KILILDFGAQ…VVDICGCQTL (196 aa). Cys-85 serves as the catalytic Nucleophile. Active-site residues include His-177 and Glu-179. The GMPS ATP-PPase domain maps to 204 to 396; it reads WTAANIIDDQ…LGLPRTMVYR (193 aa). 231–237 contacts ATP; sequence SGGVDSS.

As to quaternary structure, homodimer.

The catalysed reaction is XMP + L-glutamine + ATP + H2O = GMP + L-glutamate + AMP + diphosphate + 2 H(+). Its pathway is purine metabolism; GMP biosynthesis; GMP from XMP (L-Gln route): step 1/1. Functionally, catalyzes the synthesis of GMP from XMP. This Xanthomonas oryzae pv. oryzae (strain MAFF 311018) protein is GMP synthase [glutamine-hydrolyzing].